An 83-amino-acid polypeptide reads, in one-letter code: Type 3 secretion system needle filament protein (83 aa).

The protein belongs to the SctF family. The core secretion machinery of the T3SS is composed of approximately 20 different proteins, including cytoplasmic components, a base, an export apparatus and a needle. This subunit polymerizes and forms the helical needle filament. Interacts with the needle tip protein IpaD/SctA. Interacts with the export apparatus components SpaP/SctR, SpaQ/SctS and SpaR/SctT.

It localises to the secreted. The protein localises to the cell surface. Component of the type III secretion system (T3SS), also called injectisome, which is used to inject bacterial effector proteins into eukaryotic host cells. MxiH/SctF forms the external needle filament that protrudes from the bacterial surface. Functionally, during infection, can induce innate immune responses. The needle proteins interact with host TLR2 or TLR4, and induce signaling by NF-kappa-B and/or AP-1. This activation is MyD88 dependent and results in increased expression of cytokines, including TNF-alpha, IL-6 and IL-8. The protein is Type 3 secretion system needle filament protein of Shigella flexneri.